Here is a 271-residue protein sequence, read N- to C-terminus: Large ribosomal subunit protein uL3c (271 aa).

A chloroplast-targeting transit peptide spans 1 to 49 (MAIAMAVVSFPSLLNKTTLSSSLFTPTFLPAKSSSLLIKSSPKTRFVVS). The segment at 190–222 (HGSKSHRALGSIGAGTTPGRVYKGKKMPGRMGG) is disordered.

Belongs to the universal ribosomal protein uL3 family. As to quaternary structure, part of the 50S ribosomal subunit.

The protein localises to the plastid. Its subcellular location is the chloroplast. Functionally, one of the primary rRNA binding proteins, it binds directly near the 3'-end of the 23S rRNA, where it nucleates assembly of the 50S subunit. The polypeptide is Large ribosomal subunit protein uL3c (RPL3A) (Arabidopsis thaliana (Mouse-ear cress)).